Reading from the N-terminus, the 128-residue chain is uncharacterized protein (128 aa).

Helical transmembrane passes span 52–72 (LLVI…GIFL) and 91–111 (LFVA…VMLI).

It localises to the cell membrane. This is an uncharacterized protein from Mycoplasma pneumoniae (strain ATCC 29342 / M129 / Subtype 1) (Mycoplasmoides pneumoniae).